The following is a 146-amino-acid chain: 3-hydroxyacyl-[acyl-carrier-protein] dehydratase FabZ (146 aa).

Residue histidine 49 is part of the active site.

Belongs to the thioester dehydratase family. FabZ subfamily.

The protein resides in the cytoplasm. The catalysed reaction is a (3R)-hydroxyacyl-[ACP] = a (2E)-enoyl-[ACP] + H2O. Functionally, involved in unsaturated fatty acids biosynthesis. Catalyzes the dehydration of short chain beta-hydroxyacyl-ACPs and long chain saturated and unsaturated beta-hydroxyacyl-ACPs. The protein is 3-hydroxyacyl-[acyl-carrier-protein] dehydratase FabZ of Ectopseudomonas mendocina (strain ymp) (Pseudomonas mendocina).